The chain runs to 371 residues: Phospho-N-acetylmuramoyl-pentapeptide-transferase (371 aa).

The next 10 membrane-spanning stretches (helical) occupy residues 25–45 (YLTF…VAMG), 79–99 (TMGG…FADL), 104–124 (VWVV…DDYA), 139–159 (KLIA…IFAP), 179–199 (LVIN…AGFS), 210–230 (GLAI…AYLV), 247–267 (VGEL…FLWY), 274–294 (IFMG…IAVC), 299–319 (LVLG…MIQV), and 348–368 (TVVI…LATL).

Belongs to the glycosyltransferase 4 family. MraY subfamily. The cofactor is Mg(2+).

It localises to the cell inner membrane. It carries out the reaction UDP-N-acetyl-alpha-D-muramoyl-L-alanyl-gamma-D-glutamyl-meso-2,6-diaminopimeloyl-D-alanyl-D-alanine + di-trans,octa-cis-undecaprenyl phosphate = di-trans,octa-cis-undecaprenyl diphospho-N-acetyl-alpha-D-muramoyl-L-alanyl-D-glutamyl-meso-2,6-diaminopimeloyl-D-alanyl-D-alanine + UMP. The protein operates within cell wall biogenesis; peptidoglycan biosynthesis. Catalyzes the initial step of the lipid cycle reactions in the biosynthesis of the cell wall peptidoglycan: transfers peptidoglycan precursor phospho-MurNAc-pentapeptide from UDP-MurNAc-pentapeptide onto the lipid carrier undecaprenyl phosphate, yielding undecaprenyl-pyrophosphoryl-MurNAc-pentapeptide, known as lipid I. The chain is Phospho-N-acetylmuramoyl-pentapeptide-transferase from Caulobacter sp. (strain K31).